Consider the following 457-residue polypeptide: MGEETIAAIATGAGEGGIGIVRISGADALQVAERIFRPRRGRPLGCRRSHTVTYGWVVTPGGDRIDEALALVMRGPHSYTGEDVVELQCHGGQLAVRRVLEQALQAGARLAEPGEFTRRAFLNGRLDLSQAEAVVDLIRAKTDRAMAAAVAHLRGSLRQAIGRIRERLMEMMAHLEADIDFPELELEVQTREEVAAGCAWCLGEVERLLGGARTGRILREGLRAVLAGRPNVGKSSLLNRLVRENRAIVTPIPGTTRDVIAEWVELGGVPVQLFDTAGLRPTDDPVERIGVARTHEALAQAHLVLVVVDAAAGLGPEDREWISQLPQGAARVGVANKIDLNPAFELSALREALGGAPVVGVSAETGEGFDALEAEVARVAGAFDASEELLVNARQAEAIRRARNHLRDAQATLESGLGDELVAIDLRAAWMALGEVTGETAGEELLDQIFSRFCIGK.

Positions 22, 86, and 125 each coordinate (6S)-5-formyl-5,6,7,8-tetrahydrofolate. Residues 221-381 form the TrmE-type G domain; sequence GLRAVLAGRP…LEAEVARVAG (161 aa). Position 231 (asparagine 231) interacts with K(+). Residues 231-236, 250-256, and 275-278 each bind GTP; these read NVGKSS, TPIPGTT, and DTAG. Serine 235 serves as a coordination point for Mg(2+). 3 residues coordinate K(+): threonine 250, isoleucine 252, and threonine 255. Threonine 256 contacts Mg(2+). Position 457 (lysine 457) interacts with (6S)-5-formyl-5,6,7,8-tetrahydrofolate.

The protein belongs to the TRAFAC class TrmE-Era-EngA-EngB-Septin-like GTPase superfamily. TrmE GTPase family. Homodimer. Heterotetramer of two MnmE and two MnmG subunits. K(+) is required as a cofactor.

It localises to the cytoplasm. Functionally, exhibits a very high intrinsic GTPase hydrolysis rate. Involved in the addition of a carboxymethylaminomethyl (cmnm) group at the wobble position (U34) of certain tRNAs, forming tRNA-cmnm(5)s(2)U34. The sequence is that of tRNA modification GTPase MnmE from Symbiobacterium thermophilum (strain DSM 24528 / JCM 14929 / IAM 14863 / T).